The sequence spans 193 residues: Large ribosomal subunit protein uL5 (193 aa).

This sequence belongs to the universal ribosomal protein uL5 family. Part of the 50S ribosomal subunit; part of the 5S rRNA/L5/L18/L25 subcomplex. Contacts the 5S rRNA and the P site tRNA. Forms a bridge to the 30S subunit in the 70S ribosome.

In terms of biological role, this is one of the proteins that bind and probably mediate the attachment of the 5S RNA into the large ribosomal subunit, where it forms part of the central protuberance. In the 70S ribosome it contacts protein S13 of the 30S subunit (bridge B1b), connecting the 2 subunits; this bridge is implicated in subunit movement. Contacts the P site tRNA; the 5S rRNA and some of its associated proteins might help stabilize positioning of ribosome-bound tRNAs. The polypeptide is Large ribosomal subunit protein uL5 (Novosphingobium aromaticivorans (strain ATCC 700278 / DSM 12444 / CCUG 56034 / CIP 105152 / NBRC 16084 / F199)).